Reading from the N-terminus, the 370-residue chain is Notoamide biosynthesis cluster protein J (370 aa).

Positions 1-22 (MRIMSIMLHLLATILLSSAVSA) are cleaved as a signal peptide. N-linked (GlcNAc...) asparagine glycosylation is found at Asn159, Asn167, Asn192, Asn235, Asn282, Asn340, and Asn346.

Its function is as follows. Part of the gene cluster that mediates the biosynthesis of notoamide, a fungal indole alkaloid that belongs to a family of natural products containing a characteristic bicyclo[2.2.2]diazaoctane core. The first step of notoamide biosynthesis involves coupling of L-proline and L-tryptophan by the bimodular NRPS notE, to produce cyclo-L-tryptophan-L-proline called brevianamide F. The reverse prenyltransferase notF then acts as a deoxybrevianamide E synthase and converts brevianamide F to deoxybrevianamide E via reverse prenylation at C-2 of the indole ring leading to the bicyclo[2.2.2]diazaoctane core. Deoxybrevianamide E is further hydroxylated at C-6 of the indole ring, likely catalyzed by the cytochrome P450 monooxygenase notG, to yield 6-hydroxy-deoxybrevianamide E. 6-hydroxy-deoxybrevianamide E is a specific substrate of the prenyltransferase notC for normal prenylation at C-7 to produce 6-hydroxy-7-prenyl-deoxybrevianamide, also called notoamide S. As the proposed pivotal branching point in notoamide biosynthesis, notoamide S can be diverted to notoamide E through an oxidative pyran ring closure putatively catalyzed by either notH cytochrome P450 monooxygenase or the notD FAD-linked oxidoreductase. This step would be followed by an indole 2,3-epoxidation-initiated pinacol-like rearrangement catalyzed by the notB FAD-dependent monooxygenase leading to the formation of notoamide C and notoamide D. On the other hand notoamide S is converted to notoamide T by notH (or notD), a bifunctional oxidase that also functions as the intramolecular Diels-Alderase responsible for generation of (+)-notoamide T. To generate antipodal (-)-notoaminide T, notH' (or notD') in Aspergillus versicolor is expected to catalyze a Diels-Alder reaction leading to the opposite stereochemistry. The remaining oxidoreductase notD (or notH) likely catalyzes the oxidative pyran ring formation to yield (+)-stephacidin A. The FAD-dependent monooxygenase notI is highly similar to notB and is predicted to catalyze a similar conversion from (+)-stephacidin A to (-)-notoamide B via the 2,3-epoxidation of (+)-stephacidin A followed by a pinacol-type rearrangement. Finally, it remains unclear which enzyme could be responsible for the final hydroxylation steps leading to notoamide A and sclerotiamide. The function of notJ in the notoamide biosynthesis has not been determined yet. The chain is Notoamide biosynthesis cluster protein J from Aspergillus sp. (strain MF297-2).